The primary structure comprises 417 residues: Serine hydroxymethyltransferase (417 aa).

(6S)-5,6,7,8-tetrahydrofolate is bound by residues L119 and 123–125 (GHL). K227 carries the post-translational modification N6-(pyridoxal phosphate)lysine.

Belongs to the SHMT family. As to quaternary structure, homodimer. Pyridoxal 5'-phosphate is required as a cofactor.

The protein resides in the cytoplasm. The enzyme catalyses (6R)-5,10-methylene-5,6,7,8-tetrahydrofolate + glycine + H2O = (6S)-5,6,7,8-tetrahydrofolate + L-serine. Its pathway is one-carbon metabolism; tetrahydrofolate interconversion. It participates in amino-acid biosynthesis; glycine biosynthesis; glycine from L-serine: step 1/1. Its function is as follows. Catalyzes the reversible interconversion of serine and glycine with tetrahydrofolate (THF) serving as the one-carbon carrier. This reaction serves as the major source of one-carbon groups required for the biosynthesis of purines, thymidylate, methionine, and other important biomolecules. Also exhibits THF-independent aldolase activity toward beta-hydroxyamino acids, producing glycine and aldehydes, via a retro-aldol mechanism. This Buchnera aphidicola subsp. Cinara cedri (strain Cc) protein is Serine hydroxymethyltransferase.